A 276-amino-acid chain; its full sequence is Protein G1 (276 aa).

Disordered regions lie at residues 1–30 (MSSS…SQKR) and 178–213 (SYHK…ATAP). The span at 21-30 (RPSRYESQKR) shows a compositional bias: basic and acidic residues. An ALOG domain is found at 24–183 (RYESQKRRDW…ARGISYHKKK (160 aa)). A compositionally biased stretch (basic residues) spans 178 to 187 (SYHKKKKRRG). The Nuclear localization signal motif lies at 181–185 (KKKKR). Residues 189 to 202 (NMNGARGGGGGGAR) show a composition bias toward gly residues. The span at 203-213 (AGVNDGDATAP) shows a compositional bias: low complexity.

Belongs to the plant homeotic and developmental regulators ALOG protein family. As to expression, expressed at the empty glumes of immature spikelets, which are lemmas of the sterile florets located at the lateral side of the spikelet, throughout their development.

The protein localises to the nucleus. Its function is as follows. Probable transcription regulator that acts as a developmental regulator by promoting cell growth in response to light. Transcription regulator that restrains empty glumes growth, lemmas of the sterile florets located at the lateral side of the rice spikelet, to maintain their small size, probably by repressing lemma identity via transcription regulation. The protein is Protein G1 (G1) of Oryza sativa subsp. japonica (Rice).